The primary structure comprises 373 residues: Pulmonary surfactant-associated protein B (373 aa).

The signal sequence occupies residues 1-22 (MAKSHLLPWLLLLPILCGPGTA). The propeptide occupies 23-187 (AAITYSLACA…PQTQDLSEQL (165 aa)). Residues 24–64 (AITYSLACAQGPEFWCQSLEQALQCRALGHCLQEVWGHVEA) enclose the Saposin A-type domain. Saposin B-type domains follow at residues 64–146 (ADDL…KPRH), 191–268 (PIPY…SSED), and 287–362 (QDSD…AAPF). 9 disulfide bridges follow: Cys68–Cys142, Cys71–Cys136, Cys99–Cys111, Cys195–Cys264, Cys198–Cys258, Cys222–Cys233, Cys291–Cys358, Cys294–Cys352, and Cys317–Cys327. Asn73 carries N-linked (GlcNAc...) asparagine glycosylation. The propeptide occupies 267-373 (EDSAGPALPA…PLQCVHSPHF (107 aa)). Residue Asn303 is glycosylated (N-linked (GlcNAc...) asparagine).

In terms of assembly, homodimer; disulfide-linked.

Its subcellular location is the secreted. The protein resides in the extracellular space. It localises to the surface film. Its function is as follows. Pulmonary surfactant-associated proteins promote alveolar stability by lowering the surface tension at the air-liquid interface in the peripheral air spaces. SP-B increases the collapse pressure of palmitic acid to nearly 70 millinewtons per meter. The chain is Pulmonary surfactant-associated protein B (SFTPB) from Bos taurus (Bovine).